The sequence spans 427 residues: tRNA pseudouridine synthase Pus10 (427 aa).

Residue aspartate 240 is the Nucleophile of the active site. Residues tyrosine 306 and tyrosine 378 each contribute to the substrate site.

It belongs to the pseudouridine synthase Pus10 family.

The catalysed reaction is uridine(54) in tRNA = pseudouridine(54) in tRNA. It carries out the reaction uridine(55) in tRNA = pseudouridine(55) in tRNA. Responsible for synthesis of pseudouridine from uracil-54 and uracil-55 in the psi GC loop of transfer RNAs. The sequence is that of tRNA pseudouridine synthase Pus10 from Halorubrum lacusprofundi (strain ATCC 49239 / DSM 5036 / JCM 8891 / ACAM 34).